The chain runs to 387 residues: Chaperone protein DnaJ (387 aa).

A J domain is found at 6-70 (DYYETLGVSR…QKRAAYDQYG (65 aa)). The CR-type zinc-finger motif lies at 143 to 225 (GKDTKISYDR…CHGTGHEQER (83 aa)). Zn(2+) is bound by residues Cys156, Cys159, Cys173, Cys176, Cys199, Cys202, Cys213, and Cys216. CXXCXGXG motif repeat units lie at residues 156-163 (CHTCNGSG), 173-180 (CHKCHGSG), 199-206 (CDVCGGTG), and 213-220 (CPTCHGTG).

This sequence belongs to the DnaJ family. In terms of assembly, homodimer. The cofactor is Zn(2+).

It is found in the cytoplasm. Its function is as follows. Participates actively in the response to hyperosmotic and heat shock by preventing the aggregation of stress-denatured proteins and by disaggregating proteins, also in an autonomous, DnaK-independent fashion. Unfolded proteins bind initially to DnaJ; upon interaction with the DnaJ-bound protein, DnaK hydrolyzes its bound ATP, resulting in the formation of a stable complex. GrpE releases ADP from DnaK; ATP binding to DnaK triggers the release of the substrate protein, thus completing the reaction cycle. Several rounds of ATP-dependent interactions between DnaJ, DnaK and GrpE are required for fully efficient folding. Also involved, together with DnaK and GrpE, in the DNA replication of plasmids through activation of initiation proteins. The protein is Chaperone protein DnaJ of Lacticaseibacillus paracasei (strain ATCC 334 / BCRC 17002 / CCUG 31169 / CIP 107868 / KCTC 3260 / NRRL B-441) (Lactobacillus paracasei).